We begin with the raw amino-acid sequence, 429 residues long: Dihydroorotase (429 aa).

Zn(2+) is bound by residues H61 and H63. Residues 63 to 65 and N95 each bind substrate; that span reads HYR. Zn(2+) contacts are provided by D153, H180, and H233. N279 serves as a coordination point for substrate. D306 is a Zn(2+) binding site. The active site involves D306. Substrate contacts are provided by residues H310 and 324–325; that span reads FG.

Belongs to the metallo-dependent hydrolases superfamily. DHOase family. Class I DHOase subfamily. Zn(2+) is required as a cofactor.

It carries out the reaction (S)-dihydroorotate + H2O = N-carbamoyl-L-aspartate + H(+). It participates in pyrimidine metabolism; UMP biosynthesis via de novo pathway; (S)-dihydroorotate from bicarbonate: step 3/3. Its function is as follows. Catalyzes the reversible cyclization of carbamoyl aspartate to dihydroorotate. The chain is Dihydroorotase from Ligilactobacillus salivarius (strain UCC118) (Lactobacillus salivarius).